The chain runs to 201 residues: Small ribosomal subunit protein uS4c (201 aa).

The segment at 17 to 44 (ALPGLTNKKPRNGSDLRNQSRSGKKSQY) is disordered. The 61-residue stretch at 89–149 (MRLDNILFRL…DEQKSRALIQ (61 aa)) folds into the S4 RNA-binding domain.

This sequence belongs to the universal ribosomal protein uS4 family. As to quaternary structure, part of the 30S ribosomal subunit. Contacts protein S5. The interaction surface between S4 and S5 is involved in control of translational fidelity.

The protein resides in the plastid. Its subcellular location is the chloroplast. Its function is as follows. One of the primary rRNA binding proteins, it binds directly to 16S rRNA where it nucleates assembly of the body of the 30S subunit. Functionally, with S5 and S12 plays an important role in translational accuracy. The polypeptide is Small ribosomal subunit protein uS4c (rps4) (Nicotiana sylvestris (Wood tobacco)).